The sequence spans 363 residues: MRVSDFNFDLPDELIARYPKTDRVSCRLLQLNGENGEIFHRTFSDVLDLIDEGDLLIFNNTRVIPARMFGRKASGGKIEVLVERMLDEHRFLAHIRSSKSPKEGAELFLGEDKLGENNGIKAVMKARHGALFEVELSDKSTALLDVLQTIGHMPLPPYIDRPDEEADQECYQTVYSKVPGAVAAPTAGLHFDENLLEKLKAKGVNFEFVTLHVGAGTFQPVRVENIEDHVMHAEYVEVSQEVCNAIIATKKAGKRVIAVGTTSVRSIESAALSAEEFGNPDLIEPYFSDTSIFIYPGKKFRVVDCLITNFHLPESTLIMLVSAFAGYKNTMNAYKHAVKEKYRFFSYGDAMFINKNSNVRGLE.

It belongs to the QueA family. In terms of assembly, monomer.

It localises to the cytoplasm. It carries out the reaction 7-aminomethyl-7-carbaguanosine(34) in tRNA + S-adenosyl-L-methionine = epoxyqueuosine(34) in tRNA + adenine + L-methionine + 2 H(+). The protein operates within tRNA modification; tRNA-queuosine biosynthesis. Transfers and isomerizes the ribose moiety from AdoMet to the 7-aminomethyl group of 7-deazaguanine (preQ1-tRNA) to give epoxyqueuosine (oQ-tRNA). This Haemophilus influenzae (strain ATCC 51907 / DSM 11121 / KW20 / Rd) protein is S-adenosylmethionine:tRNA ribosyltransferase-isomerase.